Consider the following 600-residue polypeptide: Baculoviral IAP repeat-containing protein 3 (600 aa).

The BIR 1 repeat unit spans residues 27-94; it reads ELYRLSTYSA…RKLYPSCNFV (68 aa). Phosphoserine is present on serine 138. 2 BIR repeats span residues 167–233 and 253–320; these read EKAR…CPFL and HAAR…CEYL. 4 residues coordinate Zn(2+): cysteine 290, cysteine 293, histidine 310, and cysteine 317. The region spanning 436–525 is the CARD domain; the sequence is EESDDLALIR…ALYRDIFVQQ (90 aa). Residues 553 to 588 form an RING-type zinc finger; that stretch reads CKVCMDREVSIVFIPCGHLVVCKDCAPSLRKCPICR.

This sequence belongs to the IAP family. In terms of assembly, interacts with PRSS25; the interaction inhibits apoptotic suppressor activity. The BIR motifs region interacts with TNF receptor associated factors 1 and 2 (TRAF1 and TRAF2) to form a heteromeric complex, which is then recruited to the tumor necrosis factor receptor 2 (TNFR2). Interaction with TRAF2 is required for ubiquitination of IKBKE, degradation of NFKBIA and activation of NF-kappa-B. Interacts with RIP1, RIP2, RIP3, RIP4 and USP19. Post-translationally, auto-ubiquitinated and degraded by the proteasome in apoptotic cells.

The protein localises to the cytoplasm. The protein resides in the nucleus. It carries out the reaction S-ubiquitinyl-[E2 ubiquitin-conjugating enzyme]-L-cysteine + [acceptor protein]-L-lysine = [E2 ubiquitin-conjugating enzyme]-L-cysteine + N(6)-ubiquitinyl-[acceptor protein]-L-lysine.. USP19 regulates the stability of BIRC3/c-IAP2 by preventing its ubiquitination. In terms of biological role, multi-functional protein which regulates not only caspases and apoptosis, but also modulates inflammatory signaling and immunity, mitogenic kinase signaling and cell proliferation, as well as cell invasion and metastasis. Acts as an E3 ubiquitin-protein ligase regulating NF-kappa-B signaling and regulates both canonical and non-canonical NF-kappa-B signaling by acting in opposite directions: acts as a positive regulator of the canonical pathway and suppresses constitutive activation of non-canonical NF-kappa-B signaling. The target proteins for its E3 ubiquitin-protein ligase activity include: RIPK1, RIPK2, RIPK3, RIPK4, CASP3, CASP7, CASP8, IKBKE, TRAF1, and BCL10. Acts as an important regulator of innate immune signaling via regulation of Toll-like receptors (TLRs), Nodlike receptors (NLRs) and RIG-I like receptors (RLRs), collectively referred to as pattern recognition receptors (PRRs). Protects cells from spontaneous formation of the ripoptosome, a large multi-protein complex that has the capability to kill cancer cells in a caspase-dependent and caspase-independent manner. Suppresses ripoptosome formation by ubiquitinating RIPK1 and CASP8. The chain is Baculoviral IAP repeat-containing protein 3 (Birc3) from Mus musculus (Mouse).